The sequence spans 320 residues: Foldase protein PrsA (320 aa).

The first 20 residues, 1–20, serve as a signal peptide directing secretion; sequence MKMINKLIVPVTASALLLGA. Cysteine 21 is lipidated: N-palmitoyl cysteine. A lipid anchor (S-diacylglycerol cysteine) is attached at cysteine 21. The region spanning 139-245 is the PpiC domain; that stretch reads EDSKKASHIL…FGYHIIKADK (107 aa). Positions 159–198 are disordered; it reads EGLDDKEAKQKAEEIQKEVSKDPSKFGEIAKKESMDTGSA.

This sequence belongs to the PrsA family.

The protein localises to the cell membrane. It carries out the reaction [protein]-peptidylproline (omega=180) = [protein]-peptidylproline (omega=0). Its function is as follows. Plays a major role in protein secretion by helping the post-translocational extracellular folding of several secreted proteins. This chain is Foldase protein PrsA, found in Staphylococcus aureus (strain Mu3 / ATCC 700698).